We begin with the raw amino-acid sequence, 224 residues long: dTTP/UTP pyrophosphatase (224 aa).

D77 acts as the Proton acceptor in catalysis.

It belongs to the Maf family. YhdE subfamily. A divalent metal cation is required as a cofactor.

Its subcellular location is the cytoplasm. It carries out the reaction dTTP + H2O = dTMP + diphosphate + H(+). The catalysed reaction is UTP + H2O = UMP + diphosphate + H(+). Its function is as follows. Nucleoside triphosphate pyrophosphatase that hydrolyzes dTTP and UTP. May have a dual role in cell division arrest and in preventing the incorporation of modified nucleotides into cellular nucleic acids. This is dTTP/UTP pyrophosphatase from Dehalococcoides mccartyi (strain ATCC BAA-2266 / KCTC 15142 / 195) (Dehalococcoides ethenogenes (strain 195)).